Consider the following 404-residue polypeptide: Cysteine desulfurase IscS (404 aa).

Pyridoxal 5'-phosphate is bound by residues 75–76 (AT), Asn155, Gln183, and 203–205 (SAH). N6-(pyridoxal phosphate)lysine is present on Lys206. A pyridoxal 5'-phosphate-binding site is contributed by Thr243. Cys328 functions as the Cysteine persulfide intermediate in the catalytic mechanism. Cys328 serves as a coordination point for [2Fe-2S] cluster.

It belongs to the class-V pyridoxal-phosphate-dependent aminotransferase family. NifS/IscS subfamily. In terms of assembly, homodimer. Forms a heterotetramer with IscU, interacts with other sulfur acceptors. Pyridoxal 5'-phosphate serves as cofactor.

Its subcellular location is the cytoplasm. It catalyses the reaction (sulfur carrier)-H + L-cysteine = (sulfur carrier)-SH + L-alanine. It participates in cofactor biosynthesis; iron-sulfur cluster biosynthesis. Master enzyme that delivers sulfur to a number of partners involved in Fe-S cluster assembly, tRNA modification or cofactor biosynthesis. Catalyzes the removal of elemental sulfur atoms from cysteine to produce alanine. Functions as a sulfur delivery protein for Fe-S cluster synthesis onto IscU, an Fe-S scaffold assembly protein, as well as other S acceptor proteins. The polypeptide is Cysteine desulfurase IscS (Vibrio atlanticus (strain LGP32) (Vibrio splendidus (strain Mel32))).